Here is a 698-residue protein sequence, read N- to C-terminus: Testis-specific gene 10 protein (698 aa).

At Ser163 the chain carries Phosphoserine. The interval 556–689 (QMANERISMQ…SPDRGLDRSL (134 aa)) is interaction with HIF1A. Over residues 659–670 (HMSSTMKPNTKC) the composition is skewed to polar residues. Residues 659-685 (HMSSTMKPNTKCHSPERAHHRSPDRGL) form a disordered region. Positions 671–685 (HSPERAHHRSPDRGL) are enriched in basic and acidic residues. Ser688 bears the Phosphoserine mark.

The protein belongs to the CEP135/TSGA10 family. Interacts with HIF1A. Post-translationally, processed into N-terminal 27-kDa and C-terminal 55-kDa fragments. As to expression, expressed in the testis, in spermatozoa (at protein level). Expressed in actively dividing fetal tissues, including sternum, intestine, limb, kidney and stomach.

The protein resides in the cytoplasm. Its subcellular location is the cytoskeleton. It localises to the microtubule organizing center. It is found in the centrosome. The protein localises to the centriole. Its function is as follows. Plays a role in spermatogenesis. When overexpressed, prevents nuclear localization of HIF1A. The polypeptide is Testis-specific gene 10 protein (TSGA10) (Homo sapiens (Human)).